The following is a 305-amino-acid chain: MPNASRRVLVLTGPTSSGKTSVACAVSQVSDDLVIINADSKQVYRELPILTSQASCGMLYGYLSVFDEFIPSVASWMRDCADCLESVWAQKGIPLIVGGTPMYLYSLLHGINLLPSLPDCLMRELSEELDNLGPSGFLNRFVCKSGEDLSRFSCDSYKMLRDVAYFLYTGKTIQELYRESSVYKIPYDSIDVVAIIPSDRDSLYSKINERFLEAVNSGAIDEVASVVENKAAFRNRAVTTICGFREIASYLRDEITLERMVAMGQRSIRNYAKRQLTWFRNKFNGIKAFDQPQDAERYILREILL.

13–20 contacts ATP; the sequence is GPTSSGKT. 15-20 contacts substrate; it reads TSSGKT. The segment at 39–42 is interaction with substrate tRNA; the sequence is DSKQ.

This sequence belongs to the IPP transferase family. As to quaternary structure, monomer. Mg(2+) is required as a cofactor.

The catalysed reaction is adenosine(37) in tRNA + dimethylallyl diphosphate = N(6)-dimethylallyladenosine(37) in tRNA + diphosphate. In terms of biological role, catalyzes the transfer of a dimethylallyl group onto the adenine at position 37 in tRNAs that read codons beginning with uridine, leading to the formation of N6-(dimethylallyl)adenosine (i(6)A). The sequence is that of tRNA dimethylallyltransferase from Neorickettsia sennetsu (strain ATCC VR-367 / Miyayama) (Ehrlichia sennetsu).